Here is a 227-residue protein sequence, read N- to C-terminus: 2,3-bisphosphoglycerate-dependent phosphoglycerate mutase (227 aa).

Substrate is bound by residues 7–14 (RHGLSEWN), 20–21 (TG), Arg-59, 86–89 (ERHY), Lys-97, 113–114 (RR), and 182–183 (GN). The Tele-phosphohistidine intermediate role is filled by His-8. Glu-86 serves as the catalytic Proton donor/acceptor.

It belongs to the phosphoglycerate mutase family. BPG-dependent PGAM subfamily. Homodimer.

It catalyses the reaction (2R)-2-phosphoglycerate = (2R)-3-phosphoglycerate. The protein operates within carbohydrate degradation; glycolysis; pyruvate from D-glyceraldehyde 3-phosphate: step 3/5. In terms of biological role, catalyzes the interconversion of 2-phosphoglycerate and 3-phosphoglycerate. In Mannheimia succiniciproducens (strain KCTC 0769BP / MBEL55E), this protein is 2,3-bisphosphoglycerate-dependent phosphoglycerate mutase.